A 602-amino-acid polypeptide reads, in one-letter code: Potassium-transporting ATPase potassium-binding subunit (602 aa).

The next 10 helical transmembrane spans lie at alanine 3–valine 23, glutamine 64–leucine 84, glycine 135–isoleucine 155, leucine 178–isoleucine 198, phenylalanine 282–phenylalanine 302, valine 313–alanine 333, glycine 418–glycine 438, valine 456–leucine 476, tryptophan 522–isoleucine 542, and leucine 565–alanine 585.

It belongs to the KdpA family. As to quaternary structure, the system is composed of three essential subunits: KdpA, KdpB and KdpC.

The protein resides in the cell inner membrane. Functionally, part of the high-affinity ATP-driven potassium transport (or Kdp) system, which catalyzes the hydrolysis of ATP coupled with the electrogenic transport of potassium into the cytoplasm. This subunit binds the periplasmic potassium ions and delivers the ions to the membrane domain of KdpB through an intramembrane tunnel. The protein is Potassium-transporting ATPase potassium-binding subunit of Burkholderia mallei (strain ATCC 23344).